Reading from the N-terminus, the 835-residue chain is Beta-galactosidase (835 aa).

A signal peptide spans 1-22 (MGFWMAMLLMLLLCLWVSCGIA). E180 (proton donor) is an active-site residue. The Nucleophile role is filled by E249. The region spanning 749 to 835 (RPLRPKAHLK…KKLSVEAICS (87 aa)) is the SUEL-type lectin domain.

This sequence belongs to the glycosyl hydrolase 35 family.

The catalysed reaction is Hydrolysis of terminal non-reducing beta-D-galactose residues in beta-D-galactosides.. In terms of biological role, involved in cell wall degradation. Degrades polysaccharides containing beta-(1--&gt;4)-linked galactans, acting as an exo-(1--&gt;4)-beta-D-galactanase. This Solanum lycopersicum (Tomato) protein is Beta-galactosidase.